We begin with the raw amino-acid sequence, 760 residues long: Xaa-Pro dipeptidyl-peptidase (760 aa).

Catalysis depends on charge relay system residues S349, D469, and H499.

The protein belongs to the peptidase S15 family. In terms of assembly, homodimer.

It is found in the cytoplasm. It carries out the reaction Hydrolyzes Xaa-Pro-|- bonds to release unblocked, N-terminal dipeptides from substrates including Ala-Pro-|-p-nitroanilide and (sequentially) Tyr-Pro-|-Phe-Pro-|-Gly-Pro-|-Ile.. Removes N-terminal dipeptides sequentially from polypeptides having unsubstituted N-termini provided that the penultimate residue is proline. This chain is Xaa-Pro dipeptidyl-peptidase, found in Streptococcus pyogenes serotype M49 (strain NZ131).